Reading from the N-terminus, the 110-residue chain is Thiosulfate sulfurtransferase GlpE (110 aa).

The region spanning 17 to 105 is the Rhodanese domain; the sequence is RENGAQVVDI…WRSVYPADTS (89 aa). The active-site Cysteine persulfide intermediate is the Cys-65.

The protein belongs to the GlpE family.

Its subcellular location is the cytoplasm. It catalyses the reaction thiosulfate + hydrogen cyanide = thiocyanate + sulfite + 2 H(+). The enzyme catalyses thiosulfate + [thioredoxin]-dithiol = [thioredoxin]-disulfide + hydrogen sulfide + sulfite + 2 H(+). Functionally, transferase that catalyzes the transfer of sulfur from thiosulfate to thiophilic acceptors such as cyanide or dithiols. May function in a CysM-independent thiosulfate assimilation pathway by catalyzing the conversion of thiosulfate to sulfite, which can then be used for L-cysteine biosynthesis. This is Thiosulfate sulfurtransferase GlpE from Pseudomonas aeruginosa (strain ATCC 15692 / DSM 22644 / CIP 104116 / JCM 14847 / LMG 12228 / 1C / PRS 101 / PAO1).